A 554-amino-acid polypeptide reads, in one-letter code: Estrogen receptor beta (554 aa).

Positions 25–173 (TEIKNSPAGV…NPGSKKDAHF (149 aa)) are modulating. 2 consecutive NR C4-type zinc fingers follow at residues 174–194 (CAVC…CEGC) and 210–234 (CPAT…LRKC). The segment at residues 174-239 (CAVCSDYASG…RLRKCYEVGM (66 aa)) is a DNA-binding region (nuclear receptor). In terms of domain architecture, NR LBD spans 289–521 (SPEQFVLTLL…DLLLEMLNAH (233 aa)). Positions 529-554 (PLATHPEFGPLEQMEPGESLRKGEPQ) are disordered.

Belongs to the nuclear hormone receptor family. NR3 subfamily. In terms of assembly, binds DNA as a homodimer. Can form a heterodimer with ER-alpha. As to expression, brain, pituitary, skeletal muscle, liver, adrenal, kidney, intestine and ovary.

Its subcellular location is the nucleus. In terms of biological role, binds estrogens with an affinity similar to that of ER-alpha, and activates expression of reporter genes containing estrogen response elements (ERE) in an estrogen-dependent manner. Locally synthesized estrogens may act via ER beta, in addition to ER alpha, to mediate seasonal or developmental effects on nearby song nuclei. The polypeptide is Estrogen receptor beta (ESR2) (Sturnus vulgaris (Starling)).